Consider the following 140-residue polypeptide: Interleukin-4 (140 aa).

The N-terminal stretch at 1–20 (MGLNPQLVVILLFFLECTRS) is a signal peptide. 3 disulfide bridges follow: C25/C107, C47/C87, and C69/C114. N-linked (GlcNAc...) asparagine glycans are attached at residues N61, N91, and N117.

It belongs to the IL-4/IL-13 family. As to quaternary structure, interacts with IL4R. Interacts with IL13RA1.

It localises to the secreted. In terms of biological role, cytokine secreted primarily by mast cells, T-cells, eosinophils, and basophils that plays a role in regulating antibody production, hematopoiesis and inflammation, and the development of effector T-cell responses. Induces the expression of class II MHC molecules on resting B-cells. Enhances both secretion and cell surface expression of IgE and IgG1. Also regulates the expression of the low affinity Fc receptor for IgE (CD23) on both lymphocytes and monocytes. Positively regulates IL31RA expression in macrophages. Stimulates autophagy in dendritic cells by interfering with mTORC1 signaling and through the induction of RUFY4. In addition, plays a critical role in higher functions of the normal brain, such as memory and learning. Upon binding to IL4, IL4R receptor dimerizes either with the common IL2R gamma chain/IL2RG to produce the type 1 signaling complex, located mainly on hematopoietic cells, or with the IL13RA1 to produce the type 2 complex, which is also expressed on nonhematopoietic cells. Engagement of both types of receptors initiates JAK3 and to a lower extend JAK1 phosphorylation leading to activation of the signal transducer and activator of transcription 6/STAT6. This chain is Interleukin-4 (Il4), found in Mus musculus (Mouse).